The sequence spans 357 residues: MLKLVIIENMAEIMLFSLDLLLFSTDILCFNFPSKMIKLPGFITIQIFFYPQASFGISANTILFLFHIFTFVFSHRSKSIDMIISHLSLIHILLLFTQAILVSLDFFGSQNTQDDLRCKVIVFLNKVMRGLSICTPCLLNVLQAIISPSIFSLAKLKHPSASHILGFFLFSWVLNMFIGVIFCCTLWLPPVKWGQSSVCHTALFLFAHELHPQETVFHTNDFEGCHLYRVHGPLKRLHGDYFIQTIRGYLSAFTQPACPPVSPVKRASQTILLLVSFVFIYWVDFMFSFSRGVTWINDSLLVWFQVIVANSYATISPLMLIYADNQIFKTLQMLWFKYLSPPKLMLKFNRQCGSTKK.

Residues 1–3 (MLK) lie on the Extracellular side of the membrane. A helical transmembrane segment spans residues 4 to 24 (LVIIENMAEIMLFSLDLLLFS). Topologically, residues 25-52 (TDILCFNFPSKMIKLPGFITIQIFFYPQ) are cytoplasmic. A helical transmembrane segment spans residues 53 to 73 (ASFGISANTILFLFHIFTFVF). Residues 74–81 (SHRSKSID) lie on the Extracellular side of the membrane. The helical transmembrane segment at 82 to 102 (MIISHLSLIHILLLFTQAILV) threads the bilayer. Over 103–130 (SLDFFGSQNTQDDLRCKVIVFLNKVMRG) the chain is Cytoplasmic. Residues 131-151 (LSICTPCLLNVLQAIISPSIF) form a helical membrane-spanning segment. Topologically, residues 152-163 (SLAKLKHPSASH) are extracellular. Residues 164-184 (ILGFFLFSWVLNMFIGVIFCC) traverse the membrane as a helical segment. The Cytoplasmic portion of the chain corresponds to 185 to 269 (TLWLPPVKWG…PVSPVKRASQ (85 aa)). A helical transmembrane segment spans residues 270–290 (TILLLVSFVFIYWVDFMFSFS). Residues 291 to 300 (RGVTWINDSL) lie on the Extracellular side of the membrane. Residue Asn-297 is glycosylated (N-linked (GlcNAc...) asparagine). The chain crosses the membrane as a helical span at residues 301 to 321 (LVWFQVIVANSYATISPLMLI). The Cytoplasmic portion of the chain corresponds to 322 to 357 (YADNQIFKTLQMLWFKYLSPPKLMLKFNRQCGSTKK).

The protein belongs to the G-protein coupled receptor 1 family.

Its subcellular location is the cell membrane. Putative pheromone receptor. The polypeptide is Vomeronasal type-1 receptor 5 (VN1R5) (Gorilla gorilla gorilla (Western lowland gorilla)).